A 509-amino-acid chain; its full sequence is Lanosterol 14-alpha demethylase (509 aa).

The helical transmembrane segment at 30-50 threads the bilayer; it reads GNLLSMLLIACAFTLSLVYLF. Residue Cys455 participates in heme binding.

The protein belongs to the cytochrome P450 family. Heme is required as a cofactor. In terms of processing, ubiquitinated by MARCHF6, leading to proteasomal degradation.

It is found in the endoplasmic reticulum membrane. It localises to the microsome membrane. The enzyme catalyses a 14alpha-methyl steroid + 3 reduced [NADPH--hemoprotein reductase] + 3 O2 = a Delta(14) steroid + formate + 3 oxidized [NADPH--hemoprotein reductase] + 4 H2O + 4 H(+). It catalyses the reaction lanosterol + 3 reduced [NADPH--hemoprotein reductase] + 3 O2 = 4,4-dimethyl-5alpha-cholesta-8,14,24-trien-3beta-ol + formate + 3 oxidized [NADPH--hemoprotein reductase] + 4 H2O + 4 H(+). It carries out the reaction 24,25-dihydrolanosterol + 3 reduced [NADPH--hemoprotein reductase] + 3 O2 = 4,4-dimethyl-8,14-cholestadien-3beta-ol + formate + 3 oxidized [NADPH--hemoprotein reductase] + 4 H2O + 4 H(+). The catalysed reaction is a 14alpha-methyl steroid + reduced [NADPH--hemoprotein reductase] + O2 = a 14alpha-hydroxymethyl steroid + oxidized [NADPH--hemoprotein reductase] + H2O + H(+). The enzyme catalyses a 14alpha-hydroxymethyl steroid + reduced [NADPH--hemoprotein reductase] + O2 = a 14alpha-formyl steroid + oxidized [NADPH--hemoprotein reductase] + 2 H2O + H(+). It catalyses the reaction a 14alpha-formyl steroid + reduced [NADPH--hemoprotein reductase] + O2 = a Delta(14) steroid + formate + oxidized [NADPH--hemoprotein reductase] + H2O + 2 H(+). It carries out the reaction lanosterol + reduced [NADPH--hemoprotein reductase] + O2 = 32-hydroxylanosterol + oxidized [NADPH--hemoprotein reductase] + H2O + H(+). The catalysed reaction is 32-hydroxylanosterol + reduced [NADPH--hemoprotein reductase] + O2 = 32-oxolanosterol + oxidized [NADPH--hemoprotein reductase] + 2 H2O + H(+). The enzyme catalyses 32-oxolanosterol + reduced [NADPH--hemoprotein reductase] + O2 = 4,4-dimethyl-5alpha-cholesta-8,14,24-trien-3beta-ol + formate + oxidized [NADPH--hemoprotein reductase] + H2O + 2 H(+). It catalyses the reaction 24,25-dihydrolanosterol + reduced [NADPH--hemoprotein reductase] + O2 = 32-hydroxy-24,25-dihydrolanosterol + oxidized [NADPH--hemoprotein reductase] + H2O + H(+). It carries out the reaction 32-hydroxy-24,25-dihydrolanosterol + reduced [NADPH--hemoprotein reductase] + O2 = 32-oxo-24,25-dihydrolanosterol + oxidized [NADPH--hemoprotein reductase] + 2 H2O + H(+). The catalysed reaction is 32-oxo-24,25-dihydrolanosterol + reduced [NADPH--hemoprotein reductase] + O2 = 4,4-dimethyl-8,14-cholestadien-3beta-ol + formate + oxidized [NADPH--hemoprotein reductase] + H2O + 2 H(+). It participates in steroid biosynthesis; zymosterol biosynthesis; zymosterol from lanosterol: step 1/6. Its activity is regulated as follows. Inhibited by azalanstat. Inhibited by azole antifungal agents ketoconazole, itraconazole and fluconazole. In terms of biological role, sterol 14alpha-demethylase that plays a critical role in the cholesterol biosynthesis pathway, being cholesterol the major sterol component in mammalian membranes as well as a precursor for bile acid and steroid hormone synthesis. Cytochrome P450 monooxygenase that catalyzes the three-step oxidative removal of the 14alpha-methyl group (C-32) of sterols such as lanosterol (lanosta-8,24-dien-3beta-ol) and 24,25-dihydrolanosterol (DHL) in the form of formate, and converts the sterols to 4,4-dimethyl-5alpha-cholesta-8,14,24-trien-3beta-ol and 4,4-dimethyl-8,14-cholestadien-3beta-ol, respectively, which are intermediates of cholesterol biosynthesis. Can also demethylate substrates not intrinsic to mammals, such as eburicol (24-methylene-24,25-dihydrolanosterol), but at a lower rate than DHL. The polypeptide is Lanosterol 14-alpha demethylase (Macaca fascicularis (Crab-eating macaque)).